The following is a 248-amino-acid chain: Small ribosomal subunit protein uS2 (248 aa).

The protein belongs to the universal ribosomal protein uS2 family.

The sequence is that of Small ribosomal subunit protein uS2 from Janthinobacterium sp. (strain Marseille) (Minibacterium massiliensis).